A 99-amino-acid polypeptide reads, in one-letter code: Large ribosomal subunit protein bL27 (99 aa).

Positions 1–9 (MLIMNLQLF) are excised as a propeptide.

This sequence belongs to the bacterial ribosomal protein bL27 family. In terms of processing, the N-terminus is cleaved by ribosomal processing cysteine protease Prp.

The polypeptide is Large ribosomal subunit protein bL27 (Clostridium botulinum (strain Eklund 17B / Type B)).